A 166-amino-acid chain; its full sequence is Ribosome maturation factor RimM (166 aa).

The 73-residue stretch at 94–166 (GDEYYWRDLM…EMVVRLLPGL (73 aa)) folds into the PRC barrel domain.

This sequence belongs to the RimM family. Binds ribosomal protein uS19.

It is found in the cytoplasm. Functionally, an accessory protein needed during the final step in the assembly of 30S ribosomal subunit, possibly for assembly of the head region. Essential for efficient processing of 16S rRNA. May be needed both before and after RbfA during the maturation of 16S rRNA. It has affinity for free ribosomal 30S subunits but not for 70S ribosomes. The polypeptide is Ribosome maturation factor RimM (Syntrophus aciditrophicus (strain SB)).